A 318-amino-acid chain; its full sequence is L-lactate dehydrogenase (318 aa).

Residues valine 20, aspartate 41, lysine 46, tyrosine 71, and 85-86 each bind NAD(+); that span reads GA. Substrate contacts are provided by residues glutamine 88, arginine 94, and 126-129; that span reads NPVD. NAD(+) is bound by residues 124–126 and serine 149; that span reads ATN. 154–157 is a binding site for substrate; sequence DTAR. Beta-D-fructose 1,6-bisphosphate is bound by residues arginine 159 and histidine 174. Histidine 181 functions as the Proton acceptor in the catalytic mechanism. Tyrosine 226 carries the phosphotyrosine modification. Threonine 235 is a binding site for substrate.

It belongs to the LDH/MDH superfamily. LDH family. In terms of assembly, homotetramer.

Its subcellular location is the cytoplasm. It carries out the reaction (S)-lactate + NAD(+) = pyruvate + NADH + H(+). The protein operates within fermentation; pyruvate fermentation to lactate; (S)-lactate from pyruvate: step 1/1. With respect to regulation, allosterically activated by fructose 1,6-bisphosphate (FBP). In terms of biological role, catalyzes the conversion of lactate to pyruvate. The sequence is that of L-lactate dehydrogenase from Priestia megaterium (Bacillus megaterium).